The primary structure comprises 210 residues: Protein-methionine-sulfoxide reductase heme-binding subunit MsrQ (210 aa).

The next 6 helical transmembrane spans lie at 8-28, 37-57, 75-95, 110-130, 147-167, and 169-189; these read LAVFLAACVAPVWWLYQAWIF, VLVENFGLATLVMLLITLAMT, LGLWCFAYVVLHMTMYALFIL, PYIIVGALAFLGLLALAVTSN, LVYVILGLGLLHMFWIVRADL, and EWALYAGIGAILLLLRVPMIA.

Belongs to the MsrQ family. Heterodimer of a catalytic subunit (MsrP) and a heme-binding subunit (MsrQ). FMN serves as cofactor. The cofactor is heme b.

The protein resides in the cell inner membrane. Part of the MsrPQ system that repairs oxidized periplasmic proteins containing methionine sulfoxide residues (Met-O), using respiratory chain electrons. Thus protects these proteins from oxidative-stress damage caused by reactive species of oxygen and chlorine generated by the host defense mechanisms. MsrPQ is essential for the maintenance of envelope integrity under bleach stress, rescuing a wide series of structurally unrelated periplasmic proteins from methionine oxidation. MsrQ provides electrons for reduction to the reductase catalytic subunit MsrP, using the quinone pool of the respiratory chain. The polypeptide is Protein-methionine-sulfoxide reductase heme-binding subunit MsrQ (Pseudomonas syringae pv. tomato (strain ATCC BAA-871 / DC3000)).